Reading from the N-terminus, the 98-residue chain is Putative protein adenylyltransferase MJ0126 (98 aa).

The GSX(10)DXD motif motif lies at 31–45 (GSYARNEQTETSDID). Residues D43, D45, and D75 each contribute to the Mg(2+) site.

This sequence belongs to the MntA antitoxin family. Probably forms a complex with cognate toxin MJ0125. Mg(2+) is required as a cofactor.

The catalysed reaction is L-tyrosyl-[protein] + ATP = O-(5'-adenylyl)-L-tyrosyl-[protein] + diphosphate. It catalyses the reaction O-(5'-adenylyl)-L-tyrosyl-[protein] + ATP = O-[5'-(adenylyl-(5'-&gt;3')-adenylyl)]-L-tyrosyl-[protein] + diphosphate. Probable antitoxin component of a putative type VII toxin-antitoxin (TA) system. Neutralizes cognate toxic MJ0125 by di-AMPylation. In Methanocaldococcus jannaschii (strain ATCC 43067 / DSM 2661 / JAL-1 / JCM 10045 / NBRC 100440) (Methanococcus jannaschii), this protein is Putative protein adenylyltransferase MJ0126.